The following is a 99-amino-acid chain: Large ribosomal subunit protein uL23 (99 aa).

Belongs to the universal ribosomal protein uL23 family. In terms of assembly, part of the 50S ribosomal subunit. Contacts protein L29, and trigger factor when it is bound to the ribosome.

One of the early assembly proteins it binds 23S rRNA. One of the proteins that surrounds the polypeptide exit tunnel on the outside of the ribosome. Forms the main docking site for trigger factor binding to the ribosome. This Hyphomonas neptunium (strain ATCC 15444) protein is Large ribosomal subunit protein uL23.